The primary structure comprises 1148 residues: Protein pianissimo A (1148 aa).

Low complexity predominate over residues 1–34 (MTSSDSSVNTTSSSFGNISISSPNHSSSTPPLNN). The interval 1–41 (MTSSDSSVNTTSSSFGNISISSPNHSSSTPPLNNGNGNNVS) is disordered. One can recognise an N-terminal Ras-GEF domain in the interval 803–914 (KVSALSLNVL…STSGVYLPPH (112 aa)).

Belongs to the RICTOR family. Part of a complex, TORC2, consisting of tor, lst8, piaA and ripA. Additional proteins, such as 14-3-3 and heat-shock proteins, may also belong to the TORC2 complex.

The protein resides in the cytoplasm. Its function is as follows. Regulates cell growth, chemotaxis, signal relay and the actin cytoskeleton. Required for chemoattractant receptor and G protein-mediated activation of the 12 transmembrane domain adenylyl cyclase. Functions as a part of protein complex TORC2. TORC2, is presumed to be indirectly negatively modulated by rapamycin and regulates actin polarization. TORC2, but not TORC1, negatively regulates phagocytosis. This protein and dagA protein CRAC, a cytosolic regulator, are both essential for activation of the enzyme adenylyl cyclase. This protein and CRAC do not function redundantly. Both proteins are integral components of the adenylyl cyclase activation pathway. In Dictyostelium discoideum (Social amoeba), this protein is Protein pianissimo A (piaA).